The following is a 217-amino-acid chain: 3-isopropylmalate dehydratase small subunit (217 aa).

Belongs to the LeuD family. LeuD type 1 subfamily. Heterodimer of LeuC and LeuD.

The enzyme catalyses (2R,3S)-3-isopropylmalate = (2S)-2-isopropylmalate. It participates in amino-acid biosynthesis; L-leucine biosynthesis; L-leucine from 3-methyl-2-oxobutanoate: step 2/4. Its function is as follows. Catalyzes the isomerization between 2-isopropylmalate and 3-isopropylmalate, via the formation of 2-isopropylmaleate. The protein is 3-isopropylmalate dehydratase small subunit of Paraburkholderia phymatum (strain DSM 17167 / CIP 108236 / LMG 21445 / STM815) (Burkholderia phymatum).